An 89-amino-acid chain; its full sequence is Small ribosomal subunit protein uS14A (89 aa).

It belongs to the universal ribosomal protein uS14 family. As to quaternary structure, part of the 30S ribosomal subunit. Contacts proteins S3 and S10.

Binds 16S rRNA, required for the assembly of 30S particles and may also be responsible for determining the conformation of the 16S rRNA at the A site. The chain is Small ribosomal subunit protein uS14A from Pediococcus pentosaceus (strain ATCC 25745 / CCUG 21536 / LMG 10740 / 183-1w).